The sequence spans 190 residues: Peptidyl-tRNA hydrolase (190 aa).

TRNA is bound at residue Tyr-14. Residue His-19 is the Proton acceptor of the active site. Residues Tyr-64, Asn-66, and Asn-112 each contribute to the tRNA site.

Belongs to the PTH family. In terms of assembly, monomer.

It localises to the cytoplasm. The enzyme catalyses an N-acyl-L-alpha-aminoacyl-tRNA + H2O = an N-acyl-L-amino acid + a tRNA + H(+). Its function is as follows. Hydrolyzes ribosome-free peptidyl-tRNAs (with 1 or more amino acids incorporated), which drop off the ribosome during protein synthesis, or as a result of ribosome stalling. Catalyzes the release of premature peptidyl moieties from peptidyl-tRNA molecules trapped in stalled 50S ribosomal subunits, and thus maintains levels of free tRNAs and 50S ribosomes. This chain is Peptidyl-tRNA hydrolase, found in Chlorobium phaeobacteroides (strain DSM 266 / SMG 266 / 2430).